The chain runs to 635 residues: Factor of DNA methylation 2 (635 aa).

Positions 289–471 (LDEKKNLHQA…ESMNSVLMTK (183 aa)) form a coiled coil. A compositionally biased stretch (basic and acidic residues) spans 350–365 (ELERQKLDEDKRKSDA). Residues 350 to 376 (ELERQKLDEDKRKSDAMNKSLQLASRE) are disordered.

In terms of assembly, forms a complex with IDN2 and FMD1/INDL1. As to expression, highly expressed in flowers and at lower levels in roots, leaves and stems.

Forms a complex with IDN2 and FDM1/IDNL1 that is required for RNA-directed DNA methylation (RdDM) and that functions at a downstream step of the RdDM pathway. The protein is Factor of DNA methylation 2 of Arabidopsis thaliana (Mouse-ear cress).